The primary structure comprises 301 residues: Lysozyme-like protein 3 (301 aa).

An N-terminal signal peptide occupies residues 1–15; sequence MKLFALLVSITLCYS. Residues 64 to 282 enclose the Ch-type lysozyme domain; sequence HAYSVDISFH…HLSQIVHFST (219 aa).

The protein belongs to the glycosyl hydrolase 25 family.

Plays a role in the stress response to heavy metals such as copper, probably in a kgb-1-dependent manner. In Caenorhabditis elegans, this protein is Lysozyme-like protein 3.